Consider the following 160-residue polypeptide: Phosphopantetheine adenylyltransferase (160 aa).

A substrate-binding site is contributed by Ser-9. Residues Ser-9 to Phe-10 and His-17 each bind ATP. Positions 41, 73, and 87 each coordinate substrate. Residues Gly-88 to Arg-90, Glu-98, and Tyr-123 to Ser-129 each bind ATP.

Belongs to the bacterial CoaD family. In terms of assembly, homohexamer. The cofactor is Mg(2+).

Its subcellular location is the cytoplasm. The catalysed reaction is (R)-4'-phosphopantetheine + ATP + H(+) = 3'-dephospho-CoA + diphosphate. It functions in the pathway cofactor biosynthesis; coenzyme A biosynthesis; CoA from (R)-pantothenate: step 4/5. Functionally, reversibly transfers an adenylyl group from ATP to 4'-phosphopantetheine, yielding dephospho-CoA (dPCoA) and pyrophosphate. This chain is Phosphopantetheine adenylyltransferase, found in Roseiflexus sp. (strain RS-1).